A 148-amino-acid chain; its full sequence is MIIETIIGNIQTLPSLPPHIERVYMASDDLVKRIQRVVTDHGRELGIRLKEAKELADGDVLWMDDHNAIVVSVLPEDLLVIKPVSLKQMGEIAHQIGNRHLPAQFEEGEMLVQYDYLVEELLQQLAIPYKREKRKVKQAFRHIGHRHD.

It belongs to the UreE family.

The protein localises to the cytoplasm. Its function is as follows. Involved in urease metallocenter assembly. Binds nickel. Probably functions as a nickel donor during metallocenter assembly. The polypeptide is Urease accessory protein UreE (Geobacillus kaustophilus (strain HTA426)).